A 95-amino-acid polypeptide reads, in one-letter code: UPF0213 protein ESA_03545 (95 aa).

One can recognise a GIY-YIG domain in the interval 2–77 (EEWFLYLIRC…KQLTKRQKEQ (76 aa)).

This sequence belongs to the UPF0213 family.

This is UPF0213 protein ESA_03545 from Cronobacter sakazakii (strain ATCC BAA-894) (Enterobacter sakazakii).